The following is a 390-amino-acid chain: Large ribosomal subunit protein uL3y (390 aa).

Residues 1–36 (MSHRKFEHPRHGSLGFLPRKRASRHRGKVKAFPKDD) are disordered. A compositionally biased stretch (basic residues) spans 18 to 31 (PRKRASRHRGKVKA).

Belongs to the universal ribosomal protein uL3 family.

It localises to the cytoplasm. The sequence is that of Large ribosomal subunit protein uL3y (ARP2) from Arabidopsis thaliana (Mouse-ear cress).